We begin with the raw amino-acid sequence, 422 residues long: Serine protease inhibitor A3A (422 aa).

A signal peptide spans Met1–Ala17. Residues Asn218, Asn230, and Asn271 are each glycosylated (N-linked (GlcNAc...) asparagine). Residues His369 to Val394 are RCL.

This sequence belongs to the serpin family.

The protein localises to the secreted. This is Serine protease inhibitor A3A (Serpina3a) from Mus musculus (Mouse).